A 170-amino-acid polypeptide reads, in one-letter code: MARVEL domain-containing protein 1 (170 aa).

Topologically, residues Met1–Pro38 are cytoplasmic. Residues Phe34 to Arg167 form the MARVEL domain. A helical membrane pass occupies residues Thr39–Gly59. The Extracellular portion of the chain corresponds to Ser60–Ala67. The helical transmembrane segment at Phe68–Leu88 threads the bilayer. Topologically, residues His89 to Trp102 are cytoplasmic. A helical membrane pass occupies residues Ser103 to Val123. The Extracellular portion of the chain corresponds to Glu124–Ser145. The helical transmembrane segment at Phe146–Trp166 threads the bilayer. Over Arg167–Ser170 the chain is Cytoplasmic.

It is found in the membrane. Its subcellular location is the nucleus. This Xenopus laevis (African clawed frog) protein is MARVEL domain-containing protein 1 (marveld1).